A 406-amino-acid chain; its full sequence is Cysteine desulfurase (406 aa).

K226 carries the post-translational modification N6-(pyridoxal phosphate)lysine. C364 functions as the Cysteine persulfide intermediate in the catalytic mechanism.

Belongs to the class-V pyridoxal-phosphate-dependent aminotransferase family. Csd subfamily. In terms of assembly, homodimer. Interacts with SufE and the SufBCD complex composed of SufB, SufC and SufD. The interaction with SufE is required to mediate the direct transfer of the sulfur atom from the S-sulfanylcysteine. Pyridoxal 5'-phosphate serves as cofactor.

The protein localises to the cytoplasm. It catalyses the reaction (sulfur carrier)-H + L-cysteine = (sulfur carrier)-SH + L-alanine. It carries out the reaction L-selenocysteine + AH2 = hydrogenselenide + L-alanine + A + H(+). The protein operates within cofactor biosynthesis; iron-sulfur cluster biosynthesis. Cysteine desulfurases mobilize the sulfur from L-cysteine to yield L-alanine, an essential step in sulfur metabolism for biosynthesis of a variety of sulfur-containing biomolecules. Component of the suf operon, which is activated and required under specific conditions such as oxidative stress and iron limitation. Acts as a potent selenocysteine lyase in vitro, that mobilizes selenium from L-selenocysteine. Selenocysteine lyase activity is however unsure in vivo. This is Cysteine desulfurase from Salmonella choleraesuis (strain SC-B67).